Reading from the N-terminus, the 205-residue chain is Small ribosomal subunit protein uS4 (205 aa).

A disordered region spans residues 14 to 49 (RMGENIWGRPKSPVNRREYGPGQHGQRRKGKMSDFG). One can recognise an S4 RNA-binding domain in the interval 94–157 (SRLDAIVYRA…KQLVTVLEAV (64 aa)).

This sequence belongs to the universal ribosomal protein uS4 family. As to quaternary structure, part of the 30S ribosomal subunit. Contacts protein S5. The interaction surface between S4 and S5 is involved in control of translational fidelity.

Functionally, one of the primary rRNA binding proteins, it binds directly to 16S rRNA where it nucleates assembly of the body of the 30S subunit. In terms of biological role, with S5 and S12 plays an important role in translational accuracy. This is Small ribosomal subunit protein uS4 from Agrobacterium fabrum (strain C58 / ATCC 33970) (Agrobacterium tumefaciens (strain C58)).